The primary structure comprises 144 residues: RNA-binding protein 1 (144 aa).

One can recognise an RRM domain in the interval 11-84; sequence CKVYVGNLGS…TRIRVEMSSG (74 aa). Residues 78-115 are disordered; the sequence is RVEMSSGRSRDRRRGEGGSSGRSGSGRYRITPSARTTS.

Belongs to the splicing factor SR family. Interacts with x16 (via Arg/Ser-rich region). Extensively phosphorylated on serine residues in the RS domain. In terms of processing, the tandem heptapeptide repeats in the C-terminal domain (CTD) can be highly phosphorylated. The phosphorylation activates Pol II. Phosphorylation occurs at residues 'Ser-2', 'Ser-5' and 'Ser-7' of the heptapeptide repeat and is mediated by P-TEFb. Dephosphorylated by the INTAC complex when transcripts are unfavorably configured for transcriptional elongation, leading to premature transcription termination: dephosphorylation is mediated by the mts/PP2A component of the INTAC complex. Ubiquitous.

The protein resides in the nucleus. Functionally, contributes to the activation of female-specific DSX splicing in vivo by recognizing the RBP1 target sequences within the purine-rich polypyrimidine tract of the female-specific 3' splice site. The polypeptide is RNA-binding protein 1 (Rbp1) (Drosophila melanogaster (Fruit fly)).